We begin with the raw amino-acid sequence, 130 residues long: Fumarate reductase subunit C (130 aa).

The next 3 helical transmembrane spans lie at Ala-33–Gly-53, Phe-60–Ala-80, and Val-109–Leu-129.

Belongs to the FrdC family. Part of an enzyme complex containing four subunits: a flavoprotein (FrdA), an iron-sulfur protein (FrdB), and two hydrophobic anchor proteins (FrdC and FrdD).

Its subcellular location is the cell inner membrane. In terms of biological role, two distinct, membrane-bound, FAD-containing enzymes are responsible for the catalysis of fumarate and succinate interconversion; fumarate reductase is used in anaerobic growth, and succinate dehydrogenase is used in aerobic growth. Anchors the catalytic components of the fumarate reductase complex to the cell inner membrane, binds quinones. The protein is Fumarate reductase subunit C of Photorhabdus laumondii subsp. laumondii (strain DSM 15139 / CIP 105565 / TT01) (Photorhabdus luminescens subsp. laumondii).